A 166-amino-acid polypeptide reads, in one-letter code: Protein adg1 (166 aa).

A signal peptide spans 1 to 22 (MFLRSIFQTLCAVSFLAGSVFA).

The protein localises to the endoplasmic reticulum. The polypeptide is Protein adg1 (adg1) (Schizosaccharomyces pombe (strain 972 / ATCC 24843) (Fission yeast)).